The sequence spans 176 residues: 3-hydroxyanthranilate 3,4-dioxygenase (176 aa).

Arg-44 contacts O2. Residues His-48, Glu-54, and His-92 each contribute to the Fe cation site. Glu-54 lines the substrate pocket. Residues Arg-96 and Glu-106 each coordinate substrate. Cys-121, Cys-124, Cys-158, and Cys-161 together coordinate Fe cation.

It belongs to the 3-HAO family. Homodimer. The cofactor is Fe(2+).

The enzyme catalyses 3-hydroxyanthranilate + O2 = (2Z,4Z)-2-amino-3-carboxymuconate 6-semialdehyde. It participates in cofactor biosynthesis; NAD(+) biosynthesis; quinolinate from L-kynurenine: step 3/3. Catalyzes the oxidative ring opening of 3-hydroxyanthranilate to 2-amino-3-carboxymuconate semialdehyde, which spontaneously cyclizes to quinolinate. This Xanthomonas oryzae pv. oryzae (strain MAFF 311018) protein is 3-hydroxyanthranilate 3,4-dioxygenase.